The chain runs to 195 residues: Interferon omega-1 (195 aa).

Positions 1-23 (MAFSVSSLMALVVISSSPVSSMS) are cleaved as a signal peptide. 2 disulfide bridges follow: Cys-24–Cys-122 and Cys-52–Cys-162. Residue Asn-101 is glycosylated (N-linked (GlcNAc...) asparagine).

This sequence belongs to the alpha/beta interferon family.

The protein resides in the secreted. This Equus caballus (Horse) protein is Interferon omega-1.